The following is a 216-amino-acid chain: Pyridoxine/pyridoxamine 5'-phosphate oxidase 1 (216 aa).

Residues 10–13 (RREY) and Lys-68 contribute to the substrate site. Residues 63–68 (RIVLLK), 78–79 (YT), Lys-85, and Gln-107 each bind FMN. Substrate-binding residues include Tyr-125, Arg-129, and Ser-133. FMN-binding positions include 142 to 143 (QS) and Trp-186. 192-194 (RLH) contributes to the substrate binding site. Arg-196 is an FMN binding site.

The protein belongs to the pyridoxamine 5'-phosphate oxidase family. In terms of assembly, homodimer. It depends on FMN as a cofactor.

It carries out the reaction pyridoxamine 5'-phosphate + O2 + H2O = pyridoxal 5'-phosphate + H2O2 + NH4(+). The enzyme catalyses pyridoxine 5'-phosphate + O2 = pyridoxal 5'-phosphate + H2O2. It functions in the pathway cofactor metabolism; pyridoxal 5'-phosphate salvage; pyridoxal 5'-phosphate from pyridoxamine 5'-phosphate: step 1/1. It participates in cofactor metabolism; pyridoxal 5'-phosphate salvage; pyridoxal 5'-phosphate from pyridoxine 5'-phosphate: step 1/1. In terms of biological role, catalyzes the oxidation of either pyridoxine 5'-phosphate (PNP) or pyridoxamine 5'-phosphate (PMP) into pyridoxal 5'-phosphate (PLP). The sequence is that of Pyridoxine/pyridoxamine 5'-phosphate oxidase 1 from Hydrogenovibrio crunogenus (strain DSM 25203 / XCL-2) (Thiomicrospira crunogena).